The chain runs to 179 residues: MAEEIVVGRIGRPHGIRGEVTIEIRTDVPHRRFVVGAVLGREGGGTALTVSGAHWHSGRLLLHFRGVDDRGAAEALRGVLLTIDADQAGSPLDDADGDGEAVEMWWDRDLVGLRAVTTAGMLLGHVTDIIHSPAGDLLAIGGPDGGEHLVPFVRDIVPTVDPPAGRIVVDPPPGLLDLD.

The 74-residue stretch at 102–175 folds into the PRC barrel domain; sequence VEMWWDRDLV…RIVVDPPPGL (74 aa).

It belongs to the RimM family. Binds ribosomal protein uS19.

The protein resides in the cytoplasm. In terms of biological role, an accessory protein needed during the final step in the assembly of 30S ribosomal subunit, possibly for assembly of the head region. Essential for efficient processing of 16S rRNA. May be needed both before and after RbfA during the maturation of 16S rRNA. It has affinity for free ribosomal 30S subunits but not for 70S ribosomes. In Frankia casuarinae (strain DSM 45818 / CECT 9043 / HFP020203 / CcI3), this protein is Ribosome maturation factor RimM.